The following is a 129-amino-acid chain: Small ribosomal subunit protein uS11 (129 aa).

The protein belongs to the universal ribosomal protein uS11 family. As to quaternary structure, part of the 30S ribosomal subunit. Interacts with proteins S7 and S18. Binds to IF-3.

Its function is as follows. Located on the platform of the 30S subunit, it bridges several disparate RNA helices of the 16S rRNA. Forms part of the Shine-Dalgarno cleft in the 70S ribosome. The protein is Small ribosomal subunit protein uS11 of Bacillus cereus (strain G9842).